We begin with the raw amino-acid sequence, 1645 residues long: Thrombospondin type-1 domain-containing protein 7A (1645 aa).

An N-terminal signal peptide occupies residues 1–38 (MGLRAGRLASPSRGVLQLLRLPLLLLLLLSSGARGAAA). Topologically, residues 39-1595 (QGDTEVPTLY…FGPDGRLKTW (1557 aa)) are extracellular. TSP type-1 domains follow at residues 46-105 (TLYL…KVCD), 109-181 (ELYD…IPCQ), and 183-236 (DCIV…NPCE). Asparagine 223 is a glycosylation site (N-linked (GlcNAc...) asparagine). The disordered stretch occupies residues 255–300 (PHTRQARQARRRGKNKEREKERGKAVKDPEARELIKKKRNRNRQNR). The stretch at 256-304 (HTRQARQARRRGKNKEREKERGKAVKDPEARELIKKKRNRNRQNRQENR) forms a coiled coil. The segment covering 258–269 (RQARQARRRGKN) has biased composition (basic residues). Residues 270 to 288 (KEREKERGKAVKDPEAREL) show a composition bias toward basic and acidic residues. The segment covering 289-298 (IKKKRNRNRQ) has biased composition (basic residues). Asparagine 321 is a glycosylation site (N-linked (GlcNAc...) asparagine). TSP type-1 domains lie at 349-405 (ECQV…VSQG), 412-499 (ATYG…VPCP), 501-563 (ECEV…PSCY), 623-684 (DCVL…HPCT), 685-758 (VYHW…LPCR), 760-820 (DCVV…PTCH), 821-893 (SYRW…IPCQ), 895-948 (DCQF…CPCD), 949-1022 (KYNA…IPCP), 1024-1084 (DCKL…SDCN), 1085-1152 (QYIW…LPCP), 1154-1208 (DCVI…KNCY), 1209-1272 (HYDY…VECP), 1274-1329 (NCQL…KPCY), 1330-1400 (RWQY…QPCP), and 1402-1463 (DCYL…GQCY). Intrachain disulfides connect cysteine 424–cysteine 494, cysteine 444–cysteine 498, and cysteine 455–cysteine 483. An N-linked (GlcNAc...) asparagine glycan is attached at asparagine 439. N-linked (GlcNAc...) asparagine glycosylation occurs at asparagine 489. Disulfide bonds link cysteine 624-cysteine 666 and cysteine 635-cysteine 639. Asparagine 668 is a glycosylation site (N-linked (GlcNAc...) asparagine). 7 cysteine pairs are disulfide-bonded: cysteine 678/cysteine 683, cysteine 696/cysteine 753, cysteine 717/cysteine 757, cysteine 728/cysteine 741, cysteine 761/cysteine 803, cysteine 772/cysteine 776, and cysteine 813/cysteine 819. Asparagine 706 carries an N-linked (GlcNAc...) asparagine glycan. Asparagine 957 carries an N-linked (GlcNAc...) asparagine glycan. Cystine bridges form between cysteine 961–cysteine 1017, cysteine 983–cysteine 1021, cysteine 994–cysteine 1007, cysteine 1025–cysteine 1062, cysteine 1036–cysteine 1040, and cysteine 1079–cysteine 1083. The N-linked (GlcNAc...) asparagine glycan is linked to asparagine 1032. A disulfide bridge connects residues cysteine 1201 and cysteine 1207. Residue asparagine 1213 is glycosylated (N-linked (GlcNAc...) asparagine). 12 cysteine pairs are disulfide-bonded: cysteine 1220/cysteine 1267, cysteine 1228/cysteine 1271, cysteine 1239/cysteine 1252, cysteine 1275/cysteine 1313, cysteine 1286/cysteine 1290, cysteine 1323/cysteine 1328, cysteine 1339/cysteine 1395, cysteine 1346/cysteine 1399, cysteine 1357/cysteine 1376, cysteine 1403/cysteine 1447, cysteine 1414/cysteine 1418, and cysteine 1457/cysteine 1462. N-linked (GlcNAc...) asparagine glycosylation is present at asparagine 1264. The N-linked (GlcNAc...) asparagine glycan is linked to asparagine 1354. 2 N-linked (GlcNAc...) asparagine glycosylation sites follow: asparagine 1488 and asparagine 1535. A helical transmembrane segment spans residues 1596 to 1616 (VYGVAAGAFVLLVFIVSMIYL). Residues 1617–1645 (ACKKPKKPQRRQNNRLKPLTLAYDGDADM) are Cytoplasmic-facing.

Post-translationally, proteolytic cleavage in the extracellular region generates a 210 kDa soluble form. Extensively N-glycosylated. As to expression, detected on kidney podocytes along the glomerular capillary wall (at protein level).

The protein localises to the cell membrane. It is found in the cell projection. It localises to the secreted. Functionally, plays a role in actin cytoskeleton rearrangement. Its function is as follows. The soluble form promotes endothelial cell migration and filopodia formation during sprouting angiogenesis via a FAK-dependent mechanism. In Mus musculus (Mouse), this protein is Thrombospondin type-1 domain-containing protein 7A (Thsd7a).